The primary structure comprises 792 residues: X-ray radiation resistance-associated protein 1 (792 aa).

LRR repeat units follow at residues 104–125 (DLCT…IYIN), 141–155 (ALKE…IKTI), 164–184 (LLEF…CDLG), 188–209 (HLRV…LAVA), 229–250 (ALET…ASLA), and 254–275 (RLKK…QQVQ). Disordered regions lie at residues 490–517 (AEDL…SPSC), 537–562 (TLSH…KSTE), and 577–601 (IHKD…EVKG). A compositionally biased stretch (basic and acidic residues) spans 549 to 560 (SPERPSDEDSKS). Positions 723-745 (HKQYLEAKRLLKEFQARYRQLVS) form a coiled coil.

As to expression, expressed predominantly in testis followed by prostate and ovary. Low levels found in other tissues including peripheral blood leukocytes, spleen, thymus, small intestine and colon. Also expressed in neuroblastoma, glioma, breast, lung, leukemia, renal, ovarian, prostate and colorectal cancer cell lines.

It localises to the cytoplasm. The protein resides in the nucleus. In terms of biological role, may be involved in the response of cells to X-ray radiation. The polypeptide is X-ray radiation resistance-associated protein 1 (Homo sapiens (Human)).